Consider the following 186-residue polypeptide: Der GTPase-activating protein YihI (186 aa).

Positions 39 to 77 are disordered; sequence LDAKAREDKKKRKHKGLASGSRHSAVEEKANKLQNEIKD. Residues 62-77 are compositionally biased toward basic and acidic residues; the sequence is SAVEEKANKLQNEIKD.

This sequence belongs to the YihI family. As to quaternary structure, interacts with Der.

Its function is as follows. A GTPase-activating protein (GAP) that modifies Der/EngA GTPase function. May play a role in ribosome biogenesis. The sequence is that of Der GTPase-activating protein YihI from Haemophilus influenzae (strain 86-028NP).